Here is a 35-residue protein sequence, read N- to C-terminus: Photosystem II reaction center protein T (35 aa).

The chain crosses the membrane as a helical span at residues 3–23 (ALVYTFLLVSTLGIIFFAIFF).

Belongs to the PsbT family. PSII is composed of 1 copy each of membrane proteins PsbA, PsbB, PsbC, PsbD, PsbE, PsbF, PsbH, PsbI, PsbJ, PsbK, PsbL, PsbM, PsbT, PsbY, PsbZ, Psb30/Ycf12, at least 3 peripheral proteins of the oxygen-evolving complex and a large number of cofactors. It forms dimeric complexes.

It is found in the plastid. It localises to the chloroplast thylakoid membrane. Its function is as follows. Found at the monomer-monomer interface of the photosystem II (PS II) dimer, plays a role in assembly and dimerization of PSII. PSII is a light-driven water plastoquinone oxidoreductase, using light energy to abstract electrons from H(2)O, generating a proton gradient subsequently used for ATP formation. In Ginkgo biloba (Ginkgo), this protein is Photosystem II reaction center protein T.